Reading from the N-terminus, the 371-residue chain is SufE-like protein 1, chloroplastic/mitochondrial (371 aa).

A chloroplast and mitochondrion-targeting transit peptide spans 1–66; that stretch reads MAAAMSSSCC…ISTGIVPPPS (66 aa). Cys131 serves as the catalytic Cysteine persulfide intermediate. An S-glutathionyl cysteine modification is found at Cys131. The interval 218–249 is disordered; sequence VKGEEDSSSGESSESSFVSIPETKDEANVPEV.

It belongs to the SufE family. In terms of assembly, heterotetramer with NFS2. Interacts with NFS2 and NIFS1. Interacts in vitro with GRXS14, GRXS15, GRXS16 and GRXS17, but not with GRXC5. Interacts in vivo only with GRXS14 and GRXS16. Post-translationally, glutathionylated. Glutathionylation strongly reduces the stimulation of NFS2 activity. Expressed in roots, leaves, stems and flowers.

It is found in the plastid. The protein resides in the chloroplast stroma. Its subcellular location is the mitochondrion. Its pathway is cofactor biosynthesis; iron-sulfur cluster biosynthesis. Participates in cysteine desulfurization mediated by NFS2 in chloroplast and NIFS1 in mitochondrion. Activates the cysteine desulfurase activity of NFS2. Cysteine desulfurization mobilizes sulfur from L-cysteine to yield L-alanine and supplies the inorganic sulfur for iron-sulfur (Fe-S) cluster formation. Glutaredoxins regulate SUFE1 activity by inducing its reduction and deglutathionylation. The polypeptide is SufE-like protein 1, chloroplastic/mitochondrial (Arabidopsis thaliana (Mouse-ear cress)).